Reading from the N-terminus, the 312-residue chain is Methionyl-tRNA formyltransferase (312 aa).

107–110 (SLLP) lines the (6S)-5,6,7,8-tetrahydrofolate pocket.

This sequence belongs to the Fmt family.

It carries out the reaction L-methionyl-tRNA(fMet) + (6R)-10-formyltetrahydrofolate = N-formyl-L-methionyl-tRNA(fMet) + (6S)-5,6,7,8-tetrahydrofolate + H(+). Attaches a formyl group to the free amino group of methionyl-tRNA(fMet). The formyl group appears to play a dual role in the initiator identity of N-formylmethionyl-tRNA by promoting its recognition by IF2 and preventing the misappropriation of this tRNA by the elongation apparatus. The sequence is that of Methionyl-tRNA formyltransferase from Endomicrobium trichonymphae.